The sequence spans 152 residues: Nucleoside diphosphate kinase (152 aa).

The ATP site is built by Lys11, Phe59, Arg87, Thr93, Arg104, and Asn114. The Pros-phosphohistidine intermediate role is filled by His117.

The protein belongs to the NDK family. Homotetramer. The cofactor is Mg(2+).

The protein localises to the cytoplasm. The catalysed reaction is a 2'-deoxyribonucleoside 5'-diphosphate + ATP = a 2'-deoxyribonucleoside 5'-triphosphate + ADP. It carries out the reaction a ribonucleoside 5'-diphosphate + ATP = a ribonucleoside 5'-triphosphate + ADP. Major role in the synthesis of nucleoside triphosphates other than ATP. The ATP gamma phosphate is transferred to the NDP beta phosphate via a ping-pong mechanism, using a phosphorylated active-site intermediate. The chain is Nucleoside diphosphate kinase from Prochlorococcus marinus (strain MIT 9215).